Here is a 239-residue protein sequence, read N- to C-terminus: Ribonuclease PH (239 aa).

Phosphate-binding positions include R86 and 124–126 (GTR).

Belongs to the RNase PH family. In terms of assembly, homohexameric ring arranged as a trimer of dimers.

It carries out the reaction tRNA(n+1) + phosphate = tRNA(n) + a ribonucleoside 5'-diphosphate. Functionally, phosphorolytic 3'-5' exoribonuclease that plays an important role in tRNA 3'-end maturation. Removes nucleotide residues following the 3'-CCA terminus of tRNAs; can also add nucleotides to the ends of RNA molecules by using nucleoside diphosphates as substrates, but this may not be physiologically important. Probably plays a role in initiation of 16S rRNA degradation (leading to ribosome degradation) during starvation. This chain is Ribonuclease PH, found in Rickettsia bellii (strain RML369-C).